The chain runs to 441 residues: Probable cyclic di-GMP phosphodiesterase VC_1348 (441 aa).

Residues 72–187 form the Response regulatory domain; the sequence is TILIVDDSPD…LLKSRVHTHL (116 aa). Asp-120 is subject to 4-aspartylphosphate. The HD-GYP domain occupies 214-425; sequence LDRMQDAVVF…FIDIAQKFAD (212 aa).

The catalysed reaction is 3',3'-c-di-GMP + 2 H2O = 2 GMP + 2 H(+). Its function is as follows. Probable phosphodiesterase (PDE) that catalyzes the hydrolysis of cyclic diguanylate (c-di-GMP). Increases motility and decreases biofilm formation in vivo. This is Probable cyclic di-GMP phosphodiesterase VC_1348 from Vibrio cholerae serotype O1 (strain ATCC 39315 / El Tor Inaba N16961).